Here is a 1143-residue protein sequence, read N- to C-terminus: DNA polymerase II large subunit (1143 aa).

The protein belongs to the archaeal DNA polymerase II family. As to quaternary structure, heterodimer of a large subunit and a small subunit.

The catalysed reaction is DNA(n) + a 2'-deoxyribonucleoside 5'-triphosphate = DNA(n+1) + diphosphate. It catalyses the reaction Exonucleolytic cleavage in the 3'- to 5'-direction to yield nucleoside 5'-phosphates.. Possesses two activities: a DNA synthesis (polymerase) and an exonucleolytic activity that degrades single-stranded DNA in the 3'- to 5'-direction. Has a template-primer preference which is characteristic of a replicative DNA polymerase. This is DNA polymerase II large subunit (polC) from Archaeoglobus fulgidus (strain ATCC 49558 / DSM 4304 / JCM 9628 / NBRC 100126 / VC-16).